Here is a 185-residue protein sequence, read N- to C-terminus: dCTP deaminase (185 aa).

Residue 107–112 (KSTYAR) coordinates dCTP. E133 (proton donor/acceptor) is an active-site residue. Positions 152, 166, and 176 each coordinate dCTP.

Belongs to the dCTP deaminase family. Homotrimer.

It carries out the reaction dCTP + H2O + H(+) = dUTP + NH4(+). Its pathway is pyrimidine metabolism; dUMP biosynthesis; dUMP from dCTP (dUTP route): step 1/2. Functionally, catalyzes the deamination of dCTP to dUTP. The chain is dCTP deaminase from Nitratiruptor sp. (strain SB155-2).